Here is a 211-residue protein sequence, read N- to C-terminus: Ribosomal RNA small subunit methyltransferase G (211 aa).

Residues glycine 76, leucine 81, 127-128, and arginine 142 each bind S-adenosyl-L-methionine; that span reads VE.

Belongs to the methyltransferase superfamily. RNA methyltransferase RsmG family.

The protein resides in the cytoplasm. It carries out the reaction guanosine(527) in 16S rRNA + S-adenosyl-L-methionine = N(7)-methylguanosine(527) in 16S rRNA + S-adenosyl-L-homocysteine. In terms of biological role, specifically methylates the N7 position of guanine in position 527 of 16S rRNA. This is Ribosomal RNA small subunit methyltransferase G from Vibrio vulnificus (strain CMCP6).